The primary structure comprises 862 residues: Protein translocase subunit SecA (862 aa).

ATP is bound by residues Gln86, 104–108, and Asp499; that span reads GEGKT. Zn(2+) is bound by residues Cys848, Cys850, Cys859, and His860.

This sequence belongs to the SecA family. As to quaternary structure, monomer and homodimer. Part of the essential Sec protein translocation apparatus which comprises SecA, SecYEG and auxiliary proteins SecDF-YajC and YidC. Zn(2+) is required as a cofactor.

It localises to the cell inner membrane. The protein localises to the cytoplasm. The enzyme catalyses ATP + H2O + cellular proteinSide 1 = ADP + phosphate + cellular proteinSide 2.. Functionally, part of the Sec protein translocase complex. Interacts with the SecYEG preprotein conducting channel. Has a central role in coupling the hydrolysis of ATP to the transfer of proteins into and across the cell membrane, serving both as a receptor for the preprotein-SecB complex and as an ATP-driven molecular motor driving the stepwise translocation of polypeptide chains across the membrane. In Ehrlichia chaffeensis (strain ATCC CRL-10679 / Arkansas), this protein is Protein translocase subunit SecA.